Reading from the N-terminus, the 156-residue chain is WASQVSENRPVCKAIIQGKQFEGLVDTGADVSIIALNQWPKNWPKQKAVTGLVGIGTASEVYQSMEILHCLGPDNQESTVQPMITSIPLNLWGRDLLQQWGAEITMPAPLYSPTSQKIMTKRGYIPGKGLGKNEDGIKIPFEAKINQKREGIGYPF.

Positions 21-96 constitute a Peptidase A2 domain; that stretch reads FEGLVDTGAD…IPLNLWGRDL (76 aa). The active site involves Asp-26. A G-patch domain is found at 111-156; the sequence is YSPTSQKIMTKRGYIPGKGLGKNEDGIKIPFEAKINQKREGIGYPF.

Belongs to the peptidase A2 family. HERV class-II K(HML-2) subfamily. In terms of assembly, active as a homodimer. Post-translationally, autoproteolytically processed at the N-terminus. Expected C-terminal autoprocessing not detected. The sequence shown is that of the processed Pro protein.

The enzyme catalyses Processing at the authentic HIV-1 PR recognition site and release of the mature p17 matrix and the p24 capsid protein, as a result of the cleavage of the -SQNY-|-PIVQ- cleavage site.. Its function is as follows. Retroviral proteases have roles in the processing of the primary translation products and the maturation of the viral particle. Endogenous Pro proteins may have kept, lost or modified their original function during evolution. The polypeptide is Endogenous retrovirus group K member 9 Pro protein (ERVK-9) (Homo sapiens (Human)).